The chain runs to 240 residues: UDP-2,3-diacylglucosamine hydrolase (240 aa).

Positions 8, 10, 41, 79, and 114 each coordinate Mn(2+). 79–80 provides a ligand contact to substrate; the sequence is NR. Positions 122, 160, 164, 167, and 195 each coordinate substrate. Mn(2+) is bound by residues histidine 195 and histidine 197.

Belongs to the LpxH family. Mn(2+) serves as cofactor.

It localises to the cell inner membrane. It carries out the reaction UDP-2-N,3-O-bis[(3R)-3-hydroxytetradecanoyl]-alpha-D-glucosamine + H2O = 2-N,3-O-bis[(3R)-3-hydroxytetradecanoyl]-alpha-D-glucosaminyl 1-phosphate + UMP + 2 H(+). It participates in glycolipid biosynthesis; lipid IV(A) biosynthesis; lipid IV(A) from (3R)-3-hydroxytetradecanoyl-[acyl-carrier-protein] and UDP-N-acetyl-alpha-D-glucosamine: step 4/6. Functionally, hydrolyzes the pyrophosphate bond of UDP-2,3-diacylglucosamine to yield 2,3-diacylglucosamine 1-phosphate (lipid X) and UMP by catalyzing the attack of water at the alpha-P atom. Involved in the biosynthesis of lipid A, a phosphorylated glycolipid that anchors the lipopolysaccharide to the outer membrane of the cell. In Salmonella paratyphi C (strain RKS4594), this protein is UDP-2,3-diacylglucosamine hydrolase.